A 72-amino-acid chain; its full sequence is SPbeta prophage-derived uncharacterized protein YorV (72 aa).

The chain is SPbeta prophage-derived uncharacterized protein YorV (yorV) from Bacillus subtilis (strain 168).